Reading from the N-terminus, the 352-residue chain is Extracellular minor metalloprotease (352 aa).

Disordered regions lie at residues 41 to 86 and 144 to 164; these read GNKP…QPRR and TARS…ELTH. The segment covering 48 to 57 has biased composition (basic and acidic residues); the sequence is PTEKNARAGE. Low complexity-rich tracts occupy residues 71–85 and 144–156; these read ARQT…QQPR and TARS…SPST. Histidine 160 lines the Zn(2+) pocket. Glutamate 161 is an active-site residue. Residues histidine 164 and glutamate 184 each coordinate Zn(2+). Histidine 262 functions as the Proton donor in the catalytic mechanism. The tract at residues 303–325 is disordered; it reads TPTSDHLRPRHGETRAGLRTKRG. Residues 304–325 show a composition bias toward basic and acidic residues; the sequence is PTSDHLRPRHGETRAGLRTKRG.

It belongs to the peptidase M4 family. It depends on Zn(2+) as a cofactor.

It localises to the secreted. The protein is Extracellular minor metalloprotease (smp) of Serratia marcescens (strain ATCC 21074 / E-15).